The following is a 291-amino-acid chain: Aspartate carbamoyltransferase catalytic subunit (291 aa).

Carbamoyl phosphate is bound by residues arginine 49 and threonine 50. Lysine 77 is an L-aspartate binding site. Residues arginine 99, histidine 127, and glutamine 130 each coordinate carbamoyl phosphate. Arginine 160 and arginine 210 together coordinate L-aspartate. The carbamoyl phosphate site is built by glycine 249 and proline 250.

Belongs to the aspartate/ornithine carbamoyltransferase superfamily. ATCase family. As to quaternary structure, heterododecamer (2C3:3R2) of six catalytic PyrB chains organized as two trimers (C3), and six regulatory PyrI chains organized as three dimers (R2).

The catalysed reaction is carbamoyl phosphate + L-aspartate = N-carbamoyl-L-aspartate + phosphate + H(+). The protein operates within pyrimidine metabolism; UMP biosynthesis via de novo pathway; (S)-dihydroorotate from bicarbonate: step 2/3. Functionally, catalyzes the condensation of carbamoyl phosphate and aspartate to form carbamoyl aspartate and inorganic phosphate, the committed step in the de novo pyrimidine nucleotide biosynthesis pathway. In Sulfurimonas denitrificans (strain ATCC 33889 / DSM 1251) (Thiomicrospira denitrificans (strain ATCC 33889 / DSM 1251)), this protein is Aspartate carbamoyltransferase catalytic subunit.